The following is a 65-amino-acid chain: Large ribosomal subunit protein bL35 (65 aa).

The segment at 1 to 28 is disordered; it reads MPKIKTNRGAAKRFRKTGSGKIRRNKAF. Basic residues predominate over residues 10–26; the sequence is AAKRFRKTGSGKIRRNK.

This sequence belongs to the bacterial ribosomal protein bL35 family.

This is Large ribosomal subunit protein bL35 from Syntrophotalea carbinolica (strain DSM 2380 / NBRC 103641 / GraBd1) (Pelobacter carbinolicus).